The primary structure comprises 732 residues: Cullin-3B (732 aa).

In terms of domain architecture, Cullin neddylation spans 662–724; sequence DRKPQIEAAI…RDFLERDNTD (63 aa). Lys676 is covalently cross-linked (Glycyl lysine isopeptide (Lys-Gly) (interchain with G-Cter in NEDD8)).

It belongs to the cullin family. Interacts with BTB/POZ-MATH proteins BPM1 and BPM3. Neddylated. Deneddylated via its interaction with the COP9 signalosome (CSN) complex.

Its pathway is protein modification; protein ubiquitination. Its function is as follows. Component of the cullin-RING ubiquitin ligases (CRL), or CUL3-RBX1-BTB protein E3 ligase complexes which mediate the ubiquitination and subsequent proteasomal degradation of target proteins. The functional specificity of the CRL complex depends on the BTB domain-containing protein as the substrate recognition component. Involved in embryo pattern formation and endosperm development. Required for the normal division and organization of the root stem cells and columella root cap cells. Regulates primary root growth by an unknown pathway, but in an ethylene-dependent manner. Functions in distal root patterning, by an ethylene-independent mechanism. Functionally redundant with CUL3A. This chain is Cullin-3B (CUL3B), found in Arabidopsis thaliana (Mouse-ear cress).